The primary structure comprises 81 residues: ATP synthase subunit c, chloroplastic (81 aa).

2 helical membrane-spanning segments follow: residues P3 to G23 and L57 to A77.

It belongs to the ATPase C chain family. In terms of assembly, F-type ATPases have 2 components, F(1) - the catalytic core - and F(0) - the membrane proton channel. F(1) has five subunits: alpha(3), beta(3), gamma(1), delta(1), epsilon(1). F(0) has four main subunits: a(1), b(1), b'(1) and c(10-14). The alpha and beta chains form an alternating ring which encloses part of the gamma chain. F(1) is attached to F(0) by a central stalk formed by the gamma and epsilon chains, while a peripheral stalk is formed by the delta, b and b' chains.

It is found in the plastid. It localises to the chloroplast thylakoid membrane. In terms of biological role, f(1)F(0) ATP synthase produces ATP from ADP in the presence of a proton or sodium gradient. F-type ATPases consist of two structural domains, F(1) containing the extramembraneous catalytic core and F(0) containing the membrane proton channel, linked together by a central stalk and a peripheral stalk. During catalysis, ATP synthesis in the catalytic domain of F(1) is coupled via a rotary mechanism of the central stalk subunits to proton translocation. Its function is as follows. Key component of the F(0) channel; it plays a direct role in translocation across the membrane. A homomeric c-ring of between 10-14 subunits forms the central stalk rotor element with the F(1) delta and epsilon subunits. The protein is ATP synthase subunit c, chloroplastic of Pisum sativum (Garden pea).